A 217-amino-acid chain; its full sequence is Small ribosomal subunit protein uS3 (217 aa).

One can recognise a KH type-2 domain in the interval 40–110; it reads IRDLINKWFN…EVYINIHEVR (71 aa).

This sequence belongs to the universal ribosomal protein uS3 family. As to quaternary structure, part of the 30S ribosomal subunit. Forms a tight complex with proteins S10 and S14.

In terms of biological role, binds the lower part of the 30S subunit head. Binds mRNA in the 70S ribosome, positioning it for translation. The protein is Small ribosomal subunit protein uS3 of Rickettsia typhi (strain ATCC VR-144 / Wilmington).